Here is a 151-residue protein sequence, read N- to C-terminus: U1 small nuclear ribonucleoprotein C (151 aa).

The Matrin-type zinc-finger motif lies at 4-36; the sequence is FYCEYCSIYLTHSSPAGRKQHSQGRKHISAKVE.

It belongs to the U1 small nuclear ribonucleoprotein C family. As to quaternary structure, U1 snRNP is composed of the 7 core Sm proteins B/B', D1, D2, D3, E, F and G that assemble in a heptameric protein ring on the Sm site of the small nuclear RNA to form the core snRNP, and at least 3 U1 snRNP-specific proteins U1-70K, U1-A and U1-C. U1-C interacts with U1 snRNA and the 5' splice-site region of the pre-mRNA.

It is found in the nucleus. Functionally, component of the spliceosomal U1 snRNP, which is essential for recognition of the pre-mRNA 5' splice-site and the subsequent assembly of the spliceosome. U1-C is directly involved in initial 5' splice-site recognition for both constitutive and regulated alternative splicing. The interaction with the 5' splice-site seems to precede base-pairing between the pre-mRNA and the U1 snRNA. Stimulates commitment or early (E) complex formation by stabilizing the base pairing of the 5' end of the U1 snRNA and the 5' splice-site region. This chain is U1 small nuclear ribonucleoprotein C, found in Theileria annulata.